A 533-amino-acid polypeptide reads, in one-letter code: Kelch-like protein 33 (533 aa).

Kelch repeat units lie at residues 210 to 258 (ALVV…ALPA), 273 to 322 (ELYV…ALDG), 323 to 369 (KLYA…ILEG), 371 to 418 (LYVS…ALGG), 419 to 465 (RLYV…VLQG), and 467 to 514 (LLVL…ILTL).

The polypeptide is Kelch-like protein 33 (KLHL33) (Homo sapiens (Human)).